The sequence spans 354 residues: MNTRRELPESPYLAAAAGRKPHRVPVWMMRQAGRSLPEYRELRAKNTMMQACFDADLITEITLQPVRRHGVDAAILFSDIVVPLRAAGIDLDIVPDVGPVIAHPIRTAADVATVSPLRRETVAPVATAIGQLTAALGDVALIGFAGAPFTLASYLIEGGPSRNHERTKAMMLGETETWNALMAALTDVTIEFLRVQLDAGVDAIQVFDSWAGTLSLADYRAYVLPHSARVFEALAGYGVPMTHFGVGTAELLGAMSEAVSGHGVPAVVGVDWRTSLTDAAARVRPGCALQGNLDPVVLLAGWPVVERAVRAVVEDGRRAVDAGATGHVFNLGHGVLPATDPAIITDAVALVHQL.

Substrate contacts are provided by residues 30–34 (RQAGR), D79, Y154, S209, and H333.

The protein belongs to the uroporphyrinogen decarboxylase family. As to quaternary structure, homodimer.

Its subcellular location is the cytoplasm. It carries out the reaction uroporphyrinogen III + 4 H(+) = coproporphyrinogen III + 4 CO2. Its pathway is porphyrin-containing compound metabolism; protoporphyrin-IX biosynthesis; coproporphyrinogen-III from 5-aminolevulinate: step 4/4. Functionally, catalyzes the decarboxylation of four acetate groups of uroporphyrinogen-III to yield coproporphyrinogen-III. The chain is Uroporphyrinogen decarboxylase from Mycolicibacterium gilvum (strain PYR-GCK) (Mycobacterium gilvum (strain PYR-GCK)).